A 272-amino-acid polypeptide reads, in one-letter code: Zinc finger protein 32 (272 aa).

A compositionally biased stretch (basic and acidic residues) spans 50–65 (RREKLEQKSPESKALQ). The disordered stretch occupies residues 50 to 69 (RREKLEQKSPESKALQEDSP). 3 C2H2-type zinc fingers span residues 76-98 (YDCQ…ERIH), 104-126 (FECT…QRIH), and 132-154 (YQCK…ERLH). Cysteine 78, cysteine 81, histidine 94, histidine 98, cysteine 106, cysteine 109, histidine 122, histidine 126, serine 140, glutamine 143, glycine 156, tyrosine 160, phenylalanine 197, lysine 200, leucine 213, alanine 217, cysteine 246, cysteine 249, histidine 262, and cysteine 266 together coordinate Zn(2+). 2 consecutive C2H2-type zinc fingers follow at residues 160–182 (YECA…RRVH) and 188–210 (YRCD…IRVH). A C2H2-type 6 zinc finger spans residues 216-238 (YACSHCRKSFHTRGNCLLHGKVH). The CCHC-type zinc-finger motif lies at 244-266 (YLCGQCGKSFTQRGSLAVHQRSC).

Belongs to the krueppel C2H2-type zinc-finger protein family.

The protein resides in the nucleus. In terms of biological role, may be involved in transcriptional regulation. The protein is Zinc finger protein 32 (Znf32) of Mus musculus (Mouse).